A 140-amino-acid polypeptide reads, in one-letter code: Protein S40-1 (140 aa).

Residues 16 to 58 (YFPIRRREDGNEKENNRPVDFRENSERVWNKSSRRSKTTPLPS) form a disordered region. The span at 20-44 (RRREDGNEKENNRPVDFRENSERVW) shows a compositional bias: basic and acidic residues.

It belongs to the senescence regulator S40 family.

It is found in the cytoplasm. The sequence is that of Protein S40-1 from Arabidopsis thaliana (Mouse-ear cress).